The primary structure comprises 510 residues: 3,4-dihydroxyphenylacetaldehyde synthase (510 aa).

Asn-192 is a catalytic residue. Residue Lys-303 is modified to N6-(pyridoxal phosphate)lysine.

It belongs to the group II decarboxylase family. It depends on pyridoxal 5'-phosphate as a cofactor.

It carries out the reaction L-dopa + O2 + H2O + H(+) = 3,4-dihydroxyphenylacetaldehyde + H2O2 + NH4(+) + CO2. Catalyzes the decarboxylation-oxidative deamination of L-3,4-dihydroxyphenylalanine (L-DOPA) to 3,4-dihydroxylphenylacetaldehyde (DHPAA). Involved in cuticle development. Probably responsible for the protein cross-linking during the development of flexible cuticles. This chain is 3,4-dihydroxyphenylacetaldehyde synthase (amd), found in Drosophila melanogaster (Fruit fly).